The primary structure comprises 43 residues: uncharacterized protein (43 aa).

This sequence belongs to the ELIP/psbS family.

The protein localises to the plastid. The protein resides in the chloroplast. Possible role in chlorophyll and/or carotenoid binding. This is an uncharacterized protein from Cyanidium caldarium (Red alga).